The chain runs to 388 residues: F-box/LRR-repeat protein At3g59190 (388 aa).

The F-box domain maps to 11–64 (KDIISNLPDALLCHVLSFLPTTEAASTSVLAKRWRFLLAFVPNLDLDNMIYDRP). LRR repeat units lie at residues 151-177 (KVSGTDEFTIDVGEFFLPKLKTLHLSA), 180-205 (FGDEGGPPFAKLISACHALEELVMIK), 228-252 (CENIDENPKSVSFDTPNLVYLEFTD), 313-345 (TMYLSSEALEVLTFCCKKAIPVFNNLIHLTVET), and 346-371 (DERVDWESLPILLKNCPNLETLIFEV).

The polypeptide is F-box/LRR-repeat protein At3g59190 (Arabidopsis thaliana (Mouse-ear cress)).